Consider the following 430-residue polypeptide: Glial fibrillary acidic protein (430 aa).

The segment at 1 to 31 is disordered; the sequence is MERRRITSARRSYASSETMVRGHGPTRHLGT. Residues 1-70 are head; that stretch reads MERRRITSAR…KETRASERAE (70 aa). Residue Thr-7 is modified to Phosphothreonine; by AURKB and ROCK1. Residues 9–18 show a composition bias toward polar residues; the sequence is ARRSYASSET. Omega-N-methylarginine is present on Arg-11. Ser-12 is subject to Phosphoserine. The residue at position 21 (Arg-21) is an Omega-N-methylarginine. The residue at position 34 (Arg-34) is a Citrulline. Ser-36 bears the Phosphoserine; by AURKB and ROCK1 mark. At Thr-41 the chain carries Phosphothreonine. In terms of domain architecture, IF rod spans 67–375; it reads ERAEMMELND…KLLEGEENRI (309 aa). Residues 71 to 102 are coil 1A; sequence MMELNDRFASYIEKVRFLEQQNKALAAELNQL. A Phosphoserine modification is found at Ser-80. The linker 1 stretch occupies residues 103–113; the sequence is RAKEPTKLADV. Residues Thr-108 and Thr-148 each carry the phosphothreonine modification. The segment at 114–212 is coil 1B; the sequence is YQAELRELRL…EEEVRELQEQ (99 aa). Positions 213–228 are linker 12; sequence LAQQQVHVEMDVAKPD. The interval 229-250 is coil 2A; it reads LTAALREIRTQYEAVATSNMQE. The interval 251–254 is linker 2; it reads TEEW. The segment at 255–375 is coil 2B; that stretch reads YRSKFADLTD…KLLEGEENRI (121 aa). Ser-267 is subject to Phosphoserine. Citrulline is present on Arg-268. Residue Ser-321 is modified to Phosphoserine. A tail region spans residues 376 to 430; sequence TIPVQTFSNLQIRETSLDTKSVSEGHLKRNIVVKTVEMRDGEVIKESKQEHKDVM. Thr-381 is modified (phosphothreonine). Ser-383 is modified (phosphoserine). Citrulline occurs at positions 404 and 414.

This sequence belongs to the intermediate filament family. In terms of assembly, interacts with SYNM. Interacts with PSEN1 (via N-terminus). Phosphorylated by PKN1. In terms of tissue distribution, expressed in the cortex and hippocampus. Expression decreases following acute and chronic corticosterone treatment.

Its subcellular location is the cytoplasm. In terms of biological role, GFAP, a class-III intermediate filament, is a cell-specific marker that, during the development of the central nervous system, distinguishes astrocytes from other glial cells. In Rattus norvegicus (Rat), this protein is Glial fibrillary acidic protein (Gfap).